Reading from the N-terminus, the 89-residue chain is DNA-directed RNA polymerase subunit Rpo6 (89 aa).

Belongs to the archaeal Rpo6/eukaryotic RPB6 RNA polymerase subunit family. As to quaternary structure, part of the RNA polymerase complex.

It localises to the cytoplasm. It catalyses the reaction RNA(n) + a ribonucleoside 5'-triphosphate = RNA(n+1) + diphosphate. Functionally, DNA-dependent RNA polymerase (RNAP) catalyzes the transcription of DNA into RNA using the four ribonucleoside triphosphates as substrates. The chain is DNA-directed RNA polymerase subunit Rpo6 from Aeropyrum pernix (strain ATCC 700893 / DSM 11879 / JCM 9820 / NBRC 100138 / K1).